The primary structure comprises 254 residues: Serine acetyltransferase (254 aa).

This sequence belongs to the transferase hexapeptide repeat family.

It localises to the cytoplasm. It catalyses the reaction L-serine + acetyl-CoA = O-acetyl-L-serine + CoA. Its pathway is amino-acid biosynthesis; L-cysteine biosynthesis; L-cysteine from L-serine: step 1/2. The sequence is that of Serine acetyltransferase (cysE) from Buchnera aphidicola subsp. Baizongia pistaciae (strain Bp).